Here is a 554-residue protein sequence, read N- to C-terminus: Cytochrome c oxidase subunit 1-alpha (554 aa).

Residues 26 to 56 (KDIGVLYLFTAGLAGLISVTLTVYMRMELQH) traverse the membrane as a helical segment. Residues cysteine 63 and cysteine 77 are joined by a disulfide bond. A run of 6 helical transmembrane segments spans residues 81–118 (AHLW…LHIG), 127–148 (LNNL…SLLS), 175–203 (AMDL…TFLN), 215–248 (PLFA…DRNF), 260–295 (DPVL…STFA), and 301–319 (GYLP…GFIV). A Fe(II)-heme a-binding site is contributed by histidine 91. Histidine 273 and tyrosine 277 together coordinate Cu cation. Positions 273-277 (HPEVY) form a cross-link, 1'-histidyl-3'-tyrosine (His-Tyr). Residues histidine 322 and histidine 323 each coordinate Cu cation. 5 helical membrane-spanning segments follow: residues 331–359 (LTQQ…IATM), 367–390 (KTPM…VIAQ), 399–425 (DTYY…GTYY), 436–463 (PEWA…FLGR), and 478–508 (SYWN…TLFA). Histidine 406 is a heme a3 binding site. Histidine 408 contacts Fe(II)-heme a.

Belongs to the heme-copper respiratory oxidase family. Cu(2+) is required as a cofactor. The cofactor is heme.

Its subcellular location is the cell inner membrane. The catalysed reaction is 4 Fe(II)-[cytochrome c] + O2 + 8 H(+)(in) = 4 Fe(III)-[cytochrome c] + 2 H2O + 4 H(+)(out). The protein operates within energy metabolism; oxidative phosphorylation. Functionally, subunit I and II form the functional core of the enzyme complex. Electrons originating in cytochrome c are transferred via heme a and Cu(A) to the binuclear center formed by heme a3 and Cu(B). This cytochrome c oxidase shows proton pump activity across the membrane in addition to the electron transfer. This chain is Cytochrome c oxidase subunit 1-alpha (ctaDI), found in Paracoccus denitrificans.